The sequence spans 313 residues: MRASEVIADIYPGGDKLRSARVSLLSLFFNHFFARPGYAAICSTGTQGPALCQLKVTAGPCFEQKTVVRRRVVVLVAEAGPHRQRQTDAPEGERVTCIQRYRNGKVGTQPLLLVIERITAGVLRARINPERQAAIHKILVSKRHPKRGVNFLIPVGCNAPRSPRAVLHQSTWKRGTAPINETRAIPRPAAVTSHDAAGATSCAYAAPAATPTPQRRPAESVSRVPRTVLAVSYVFSLHTFQKAAGNPHSLPKFYPPPANICRVLFLQEGRAPRTTAAYPVRACNILTGEVFSHTGEVLCANRACGASPTPSSM.

This is an uncharacterized protein from Treponema pallidum (strain Nichols).